The following is a 196-amino-acid chain: Elongation factor Ts (196 aa).

Positions 80–83 (TDFV) are involved in Mg(2+) ion dislocation from EF-Tu.

This sequence belongs to the EF-Ts family.

It localises to the cytoplasm. Its function is as follows. Associates with the EF-Tu.GDP complex and induces the exchange of GDP to GTP. It remains bound to the aminoacyl-tRNA.EF-Tu.GTP complex up to the GTP hydrolysis stage on the ribosome. The sequence is that of Elongation factor Ts from Thermosipho melanesiensis (strain DSM 12029 / CIP 104789 / BI429).